Reading from the N-terminus, the 188-residue chain is Pyridoxal 5'-phosphate synthase subunit PdxT (188 aa).

46–48 contacts L-glutamine; that stretch reads GES. Cys-78 (nucleophile) is an active-site residue. Residues Arg-105 and 134-135 each bind L-glutamine; that span reads IR. Catalysis depends on charge relay system residues His-170 and Glu-172.

The protein belongs to the glutaminase PdxT/SNO family. In terms of assembly, in the presence of PdxS, forms a dodecamer of heterodimers. Only shows activity in the heterodimer.

The catalysed reaction is aldehydo-D-ribose 5-phosphate + D-glyceraldehyde 3-phosphate + L-glutamine = pyridoxal 5'-phosphate + L-glutamate + phosphate + 3 H2O + H(+). It carries out the reaction L-glutamine + H2O = L-glutamate + NH4(+). It participates in cofactor biosynthesis; pyridoxal 5'-phosphate biosynthesis. Catalyzes the hydrolysis of glutamine to glutamate and ammonia as part of the biosynthesis of pyridoxal 5'-phosphate. The resulting ammonia molecule is channeled to the active site of PdxS. This is Pyridoxal 5'-phosphate synthase subunit PdxT from Desulforamulus reducens (strain ATCC BAA-1160 / DSM 100696 / MI-1) (Desulfotomaculum reducens).